Reading from the N-terminus, the 463-residue chain is Adenosylhomocysteinase (463 aa).

Positions 54, 129, and 189 each coordinate substrate. 190–192 (TTT) serves as a coordination point for NAD(+). Lys-219 and Asp-223 together coordinate substrate. NAD(+)-binding positions include Asn-224, 253–258 (GYGDVG), Glu-276, Asn-311, 332–334 (IGH), and Asn-377.

The protein belongs to the adenosylhomocysteinase family. NAD(+) serves as cofactor.

The protein resides in the cytoplasm. It carries out the reaction S-adenosyl-L-homocysteine + H2O = L-homocysteine + adenosine. Its pathway is amino-acid biosynthesis; L-homocysteine biosynthesis; L-homocysteine from S-adenosyl-L-homocysteine: step 1/1. May play a key role in the regulation of the intracellular concentration of adenosylhomocysteine. This chain is Adenosylhomocysteinase, found in Caulobacter vibrioides (strain ATCC 19089 / CIP 103742 / CB 15) (Caulobacter crescentus).